A 91-amino-acid polypeptide reads, in one-letter code: Probable Fe(2+)-trafficking protein (91 aa).

Belongs to the Fe(2+)-trafficking protein family. In terms of assembly, monomer.

Its function is as follows. Could be a mediator in iron transactions between iron acquisition and iron-requiring processes, such as synthesis and/or repair of Fe-S clusters in biosynthetic enzymes. The sequence is that of Probable Fe(2+)-trafficking protein from Klebsiella pneumoniae subsp. pneumoniae (strain ATCC 700721 / MGH 78578).